The following is a 302-amino-acid chain: Protein FdhE homolog (302 aa).

The protein belongs to the FdhE family.

Its subcellular location is the cytoplasm. Functionally, necessary for formate dehydrogenase activity. The sequence is that of Protein FdhE homolog from Shewanella oneidensis (strain ATCC 700550 / JCM 31522 / CIP 106686 / LMG 19005 / NCIMB 14063 / MR-1).